Reading from the N-terminus, the 580-residue chain is Peptidyl-prolyl cis-trans isomerase-like 2 (580 aa).

The region spanning 42–115 is the U-box domain; the sequence is KRLPFRFCSL…GEYIDPVTYK (74 aa). 5 disordered regions span residues 182 to 201, 227 to 259, 439 to 459, 479 to 530, and 553 to 580; these read IKEGESGLSDEQLREREDPS, QERAQKAGNAASTPVAKTDAPVKSAQKTASYQS, SPTLNKLETHPVNPTTNRPTP, QKKQ…SSTT, and FVDEEPTSEPAKKKFKGIGGFGDFSSWD. Positions 309 to 468 constitute a PPIase cyclophilin-type domain; the sequence is QKGYARISTT…PDIRIVDVTI (160 aa). A compositionally biased stretch (polar residues) spans 439–457; it reads SPTLNKLETHPVNPTTNRP. Residues 490 to 507 show a composition bias toward basic and acidic residues; it reads EANRTAENDEEGSRRAED.

This sequence belongs to the cyclophilin-type PPIase family. PPIL2 subfamily.

The protein localises to the nucleus. The enzyme catalyses [protein]-peptidylproline (omega=180) = [protein]-peptidylproline (omega=0). The catalysed reaction is S-ubiquitinyl-[E2 ubiquitin-conjugating enzyme]-L-cysteine + [acceptor protein]-L-lysine = [E2 ubiquitin-conjugating enzyme]-L-cysteine + N(6)-ubiquitinyl-[acceptor protein]-L-lysine.. The protein operates within protein modification; protein ubiquitination. May catalyze the cis-trans isomerization of proline imidic peptide bonds in oligopeptides thereby assisting the folding of proteins. May also function as a chaperone, playing a role in intracellular transport of proteins. May also have a protein ubiquitin ligase activity acting as an E3 ubiquitin protein ligase or as a ubiquitin-ubiquitin ligase promoting elongation of ubiquitin chains on proteins. In Emericella nidulans (strain FGSC A4 / ATCC 38163 / CBS 112.46 / NRRL 194 / M139) (Aspergillus nidulans), this protein is Peptidyl-prolyl cis-trans isomerase-like 2 (cyp8).